Consider the following 235-residue polypeptide: Transmembrane emp24 domain-containing protein 9 (235 aa).

The N-terminal stretch at 1 to 37 is a signal peptide; it reads MAAERSLWVVGLCPGSRLGRVVRVLLLLLWFAARGGA. Over 38 to 201 the chain is Lumenal; that stretch reads LYFHIGETEK…FRQTSESTNQ (164 aa). The GOLD domain maps to 47 to 145; it reads KKCFIEEIPD…MLRVHLDIQV (99 aa). The interval 121-160 is required for interaction with STX17; sequence CLHSNSTKFSLFAGGMLRVHLDIQVGEHANDYAEIAAKDK. Asn-125 carries an N-linked (GlcNAc...) asparagine glycan. Residues 154-184 adopt a coiled-coil conformation; it reads EIAAKDKLSELQLRVRQLVEQVEQIQKEQNY. Lys-160 carries the N6-acetyllysine modification. The chain crosses the membrane as a helical span at residues 202–222; it reads RVLWWSILQTLILVAIGVWQM. Over 223–235 the chain is Cytoplasmic; that stretch reads RHLKSFFEAKKLV. The COPII vesicle coat-binding signature appears at 228 to 229; the sequence is FF. The short motif at 228–235 is the COPI vesicle coat-binding element; it reads FFEAKKLV.

It belongs to the EMP24/GP25L family. As to quaternary structure, monomer and homodimer in endoplasmic reticulum. Predominantly monomeric and to lesser extent homodimeric in endoplasmic reticulum-Golgi intermediate compartment and cis-Golgi network. Probably oligomerizes with other members of the EMP24/GP25L family such as TMED2, TMED7 and TMED10. Interacts with TMED5. Interacts (via C-terminus) with COPG1; the interaction involves dimeric TMED9. Interacts with PTPN2 and SPAST. Interacts with STX17; the interaction is direct. Post-translationally, N-linked glycosylated containing high mannose.

The protein localises to the endoplasmic reticulum membrane. It localises to the golgi apparatus. It is found in the cis-Golgi network membrane. The protein resides in the endoplasmic reticulum-Golgi intermediate compartment membrane. Its subcellular location is the trans-Golgi network membrane. In terms of biological role, appears to be involved in vesicular protein trafficking, mainly in the early secretory pathway. In COPI vesicle-mediated retrograde transport involved in the coatomer recruitment to membranes of the early secretory pathway. Increases coatomer-dependent activity of ARFGAP2. Thought to play a crucial role in the specific retention of p24 complexes in cis-Golgi membranes; specifically contributes to the coupled localization of TMED2 and TMED10 in the cis-Golgi network. May be involved in organization of intracellular membranes, such as of the ER-Golgi intermediate compartment and the Golgi apparatus. Involved in ER localization of PTPN2. This chain is Transmembrane emp24 domain-containing protein 9 (TMED9), found in Bos taurus (Bovine).